Here is a 281-residue protein sequence, read N- to C-terminus: Penicillin-insensitive murein endopeptidase (281 aa).

The signal sequence occupies residues 1-24 (MKQGLIGVLALALGATLLSSAVWA). 3 disulfide bridges follow: Cys-49–Cys-270, Cys-192–Cys-240, and Cys-221–Cys-228. Zn(2+) is bound by residues His-115, His-118, Asp-125, and His-216. Positions 230–271 (EQSEPPIGDGCGAELTSWFQPKQPSSEAPEKTTPPPLPPSCQ) are disordered. Residues 246-255 (SWFQPKQPSS) are compositionally biased toward polar residues.

The protein belongs to the peptidase M74 family. In terms of assembly, dimer. Zn(2+) is required as a cofactor.

It is found in the periplasm. In terms of biological role, murein endopeptidase that cleaves the D-alanyl-meso-2,6-diamino-pimelyl amide bond that connects peptidoglycan strands. Likely plays a role in the removal of murein from the sacculus. In Pectobacterium atrosepticum (strain SCRI 1043 / ATCC BAA-672) (Erwinia carotovora subsp. atroseptica), this protein is Penicillin-insensitive murein endopeptidase (mepA).